The chain runs to 284 residues: NADH-cytochrome b5 reductase 1 (284 aa).

A helical membrane pass occupies residues 8-28 (PFIIFATVAAIISSAVAYYFF). The FAD-binding FR-type domain maps to 41 to 144 (NDFQKFPLIE…RGPKGFFTYT (104 aa)). Residues 124–139 (ESKK…GPKG) and 150–182 (SFGM…KVSL) each bind FAD.

This sequence belongs to the flavoprotein pyridine nucleotide cytochrome reductase family. In terms of assembly, monomer. Component of the 2-(3-amino-3-carboxypropyl)histidine synthase complex composed of DPH1, DPH2, DPH3 and a NADH-dependent reductase, predominantly CBR1. The cofactor is FAD.

The protein localises to the mitochondrion outer membrane. The catalysed reaction is 2 Fe(III)-[cytochrome b5] + NADH = 2 Fe(II)-[cytochrome b5] + NAD(+) + H(+). It catalyses the reaction 2 Fe(3+)-[Dph3] + NADH = 2 Fe(2+)-[Dph3] + NAD(+) + H(+). It functions in the pathway protein modification; peptidyl-diphthamide biosynthesis. In terms of biological role, NADH-dependent reductase for DPH3 and cytochrome b5. Required for the first step of diphthamide biosynthesis, a post-translational modification of histidine which occurs in elongation factor 2. DPH1 and DPH2 transfer a 3-amino-3-carboxypropyl (ACP) group from S-adenosyl-L-methionine (SAM) to a histidine residue, the reaction is assisted by a reduction system comprising DPH3 and a NADH-dependent reductase, predominantly CBR1. By reducing DPH3, also involved in the formation of the tRNA wobble base modification mcm5s 2U (5-methoxycarbonylmethyl-2-thiouridine), mediated by the elongator complex. The cytochrome b5/NADH cytochrome b5 reductase electron transfer system supports the catalytic activity of several sterol biosynthetic enzymes. The chain is NADH-cytochrome b5 reductase 1 (CBR1) from Debaryomyces hansenii (strain ATCC 36239 / CBS 767 / BCRC 21394 / JCM 1990 / NBRC 0083 / IGC 2968) (Yeast).